We begin with the raw amino-acid sequence, 438 residues long: Exodeoxyribonuclease 7 large subunit (438 aa).

The interval 406 to 438 (ATSTGPTDDIPSSAARLPASPAPDARPASGPES) is disordered.

It belongs to the XseA family. As to quaternary structure, heterooligomer composed of large and small subunits.

It localises to the cytoplasm. The enzyme catalyses Exonucleolytic cleavage in either 5'- to 3'- or 3'- to 5'-direction to yield nucleoside 5'-phosphates.. In terms of biological role, bidirectionally degrades single-stranded DNA into large acid-insoluble oligonucleotides, which are then degraded further into small acid-soluble oligonucleotides. In Clavibacter sepedonicus (Clavibacter michiganensis subsp. sepedonicus), this protein is Exodeoxyribonuclease 7 large subunit.